Consider the following 284-residue polypeptide: Origin of replication complex subunit 6 (284 aa).

Belongs to the ORC6 family. In terms of assembly, component of the origin recognition complex (ORC) composed of at least ORC1 (ORC1A or ORC1B), ORC2, ORC3, ORC4, ORC5 and ORC6. ORC is regulated in a cell-cycle and development dependent manner. It is sequentially assembled at the exit from anaphase of mitosis and disassembled as cells enter S phase. Interacts directly with ORC2, ORC3, ORC4 and ORC5. In terms of tissue distribution, follow a cell-cycle regulation with a peak at the G1/S-phase. Mostly expressed in siliques, flowers, flower buds and mature leaves, and, to a lower exent, in roots, leaves and stems.

It localises to the nucleus. Its function is as follows. Component of the origin recognition complex (ORC) that binds origins of replication. DNA-binding is ATP-dependent. The specific DNA sequences that define origins of replication have not been identified yet. ORC is required to assemble the pre-replication complex necessary to initiate DNA replication. The chain is Origin of replication complex subunit 6 from Arabidopsis thaliana (Mouse-ear cress).